The following is a 288-amino-acid chain: Pantothenate synthetase (288 aa).

Position 30–37 (30–37 (MGNLHNGH)) interacts with ATP. The active-site Proton donor is His37. Position 61 (Gln61) interacts with (R)-pantoate. Residue Gln61 participates in beta-alanine binding. ATP is bound at residue 149–152 (GQKD). Residue Gln155 coordinates (R)-pantoate. Residues Val178 and 186–189 (LSSR) each bind ATP.

Belongs to the pantothenate synthetase family. Homodimer.

It localises to the cytoplasm. It catalyses the reaction (R)-pantoate + beta-alanine + ATP = (R)-pantothenate + AMP + diphosphate + H(+). It functions in the pathway cofactor biosynthesis; (R)-pantothenate biosynthesis; (R)-pantothenate from (R)-pantoate and beta-alanine: step 1/1. Its function is as follows. Catalyzes the condensation of pantoate with beta-alanine in an ATP-dependent reaction via a pantoyl-adenylate intermediate. The protein is Pantothenate synthetase of Tolumonas auensis (strain DSM 9187 / NBRC 110442 / TA 4).